The chain runs to 402 residues: Mannonate dehydratase (402 aa).

The protein belongs to the mannonate dehydratase family. It depends on Fe(2+) as a cofactor. Requires Mn(2+) as cofactor.

The enzyme catalyses D-mannonate = 2-dehydro-3-deoxy-D-gluconate + H2O. It participates in carbohydrate metabolism; pentose and glucuronate interconversion. In terms of biological role, catalyzes the dehydration of D-mannonate. In Rhizobium meliloti (strain 1021) (Ensifer meliloti), this protein is Mannonate dehydratase.